The sequence spans 1551 residues: Serine/threonine-protein kinase MRCK gamma (1551 aa).

Positions 71–337 constitute a Protein kinase domain; that stretch reads FEILKVIGRG…LDDFRKHPFF (267 aa). Residues 77–85 and Lys-100 contribute to the ATP site; that span reads IGRGAFGEV. Asp-195 serves as the catalytic Proton acceptor. Ser-216 and Ser-228 each carry phosphoserine; by autocatalysis. Thr-234 bears the Phosphothreonine; by autocatalysis mark. One can recognise an AGC-kinase C-terminal domain in the interval 338-408; it reads EGVDWERLAT…TSGSPFDVQS (71 aa). Coiled-coil stretches lie at residues 442–675 and 729–801; these read QPQE…TESN and KARR…QARG. Positions 578-605 are disordered; it reads QESSQAKTVHAAPETNGIGSPEGQSQEA. A disordered region spans residues 820–886; the sequence is TEKDSAKDPG…SHTLRPRSFP (67 aa). Positions 839–849 are enriched in basic and acidic residues; that stretch reads AEAELRPEGRR. Residues 877-926 form a Phorbol-ester/DAG-type zinc finger; that stretch reads SHTLRPRSFPSPTKCLRCTSLMLGLGRQGLGCDTCGYFCHSACASQAPPC. The PH domain maps to 946-1065; the sequence is GTAYEGFLSV…WLQVLGELQR (120 aa). One can recognise a CNH domain in the interval 1091–1365; it reads LPHALCAAVI…RPLNPEGSLF (275 aa). A CRIB domain is found at 1436–1449; it reads ISPPTNFNHLVHVG. The segment at 1441–1551 is disordered; that stretch reads NFNHLVHVGP…PPDPESESSP (111 aa). Residues 1455–1468 are compositionally biased toward basic and acidic residues; the sequence is PNTRDGTRAQEQKS. Residue Ser-1481 is modified to Phosphoserine. The segment covering 1511 to 1527 has biased composition (polar residues); that stretch reads TSLSSESVSCPQGSLSP.

The protein belongs to the protein kinase superfamily. AGC Ser/Thr protein kinase family. DMPK subfamily. In terms of assembly, homodimer and homotetramer via the coiled coil regions. Interacts tightly with GTP-bound but not GDP-bound CDC42. Mg(2+) is required as a cofactor.

It is found in the cytoplasm. The catalysed reaction is L-seryl-[protein] + ATP = O-phospho-L-seryl-[protein] + ADP + H(+). It catalyses the reaction L-threonyl-[protein] + ATP = O-phospho-L-threonyl-[protein] + ADP + H(+). Its activity is regulated as follows. Maintained in an inactive, closed conformation by an interaction between the kinase domain and the negative autoregulatory C-terminal coiled-coil region. Agonist binding to the phorbol ester binding site disrupts this, releasing the kinase domain to allow N-terminus-mediated dimerization and kinase activation by transautophosphorylation. May act as a downstream effector of CDC42 in cytoskeletal reorganization. Contributes to the actomyosin contractility required for cell invasion, through the regulation of MYPT1 and thus MLC2 phosphorylation. This is Serine/threonine-protein kinase MRCK gamma from Mus musculus (Mouse).